A 212-amino-acid polypeptide reads, in one-letter code: 2,3-bisphosphoglycerate-dependent phosphoglycerate mutase (212 aa).

Residues 9–16 (RHGQSEWN), 22–23 (TG), R61, 88–91 (ERDY), K99, 115–116 (RR), and 159–160 (GN) each bind substrate. The active-site Tele-phosphohistidine intermediate is H10. E88 serves as the catalytic Proton donor/acceptor.

Belongs to the phosphoglycerate mutase family. BPG-dependent PGAM subfamily. Homodimer.

The catalysed reaction is (2R)-2-phosphoglycerate = (2R)-3-phosphoglycerate. Its pathway is carbohydrate degradation; glycolysis; pyruvate from D-glyceraldehyde 3-phosphate: step 3/5. Catalyzes the interconversion of 2-phosphoglycerate and 3-phosphoglycerate. This Methylorubrum extorquens (strain CM4 / NCIMB 13688) (Methylobacterium extorquens) protein is 2,3-bisphosphoglycerate-dependent phosphoglycerate mutase.